The following is a 612-amino-acid chain: Zinc metalloproteinase nas-36 (612 aa).

Residues 1 to 16 (MLLLVLLFVFISATNA) form the signal peptide. An N-linked (GlcNAc...) asparagine glycan is attached at Asn15. The propeptide occupies 17–122 (SDVGRRELEK…KSKPNVRGRR (106 aa)). Residues 123–320 (SFDASPESKW…IETINKAYCS (198 aa)) form the Peptidase M12A domain. An N-linked (GlcNAc...) asparagine glycan is attached at Asn163. Cystine bridges form between Cys166–Cys319, Cys190–Cys209, Cys329–Cys343, Cys345–Cys354, Cys365–Cys394, Cys515–Cys546, Cys519–Cys551, and Cys531–Cys536. His217 is a Zn(2+) binding site. Residue Glu218 is part of the active site. Positions 221 and 227 each coordinate Zn(2+). Positions 320 to 355 (SDRCSGSNDCKNGGYPHPKQCDTCLCPNGLSGPKCE) constitute an EGF-like domain. In terms of domain architecture, CUB spans 365-478 (CGGKIVVKEE…VGFKLQARAT (114 aa)). Residues 503–552 (TDQWAEWGSWSQCSRSCGGCGIMSRVRVCRTKQCKGRRQEFSTCNLKACP) form the TSP type-1 domain.

Requires Zn(2+) as cofactor.

It localises to the secreted. With respect to regulation, inhibited by 1,10-phenanthroline. Metalloprotease. Involved in molting, a process during larval stages in which a new cuticle is formed and the old cuticle is shed. This Haemonchus contortus (Barber pole worm) protein is Zinc metalloproteinase nas-36.